The chain runs to 130 residues: Small ribosomal subunit protein uS8 (130 aa).

It belongs to the universal ribosomal protein uS8 family. As to quaternary structure, part of the 30S ribosomal subunit. Contacts proteins S5 and S12.

Its function is as follows. One of the primary rRNA binding proteins, it binds directly to 16S rRNA central domain where it helps coordinate assembly of the platform of the 30S subunit. The sequence is that of Small ribosomal subunit protein uS8 from Aliivibrio salmonicida (strain LFI1238) (Vibrio salmonicida (strain LFI1238)).